The sequence spans 146 residues: Myoglobin (146 aa).

The Globin domain maps to 2-141; it reads GDFDMVLKFW…IIADIDATYK (140 aa). Position 60 (histidine 60) interacts with nitrite. Histidine 60 serves as a coordination point for O2. Histidine 89 contacts heme b.

This sequence belongs to the globin family. As to quaternary structure, monomeric.

It is found in the cytoplasm. Its subcellular location is the sarcoplasm. It carries out the reaction Fe(III)-heme b-[protein] + nitric oxide + H2O = Fe(II)-heme b-[protein] + nitrite + 2 H(+). The enzyme catalyses H2O2 + AH2 = A + 2 H2O. Monomeric heme protein which primary function is to store oxygen and facilitate its diffusion within muscle tissues. Reversibly binds oxygen through a pentacoordinated heme iron and enables its timely and efficient release as needed during periods of heightened demand. Depending on the oxidative conditions of tissues and cells, and in addition to its ability to bind oxygen, it also has a nitrite reductase activity whereby it regulates the production of bioactive nitric oxide. Under stress conditions, like hypoxia and anoxia, it also protects cells against reactive oxygen species thanks to its pseudoperoxidase activity. In Tetraodon nigroviridis (Spotted green pufferfish), this protein is Myoglobin (mb).